Consider the following 336-residue polypeptide: Transmembrane protein 120A (336 aa).

Topologically, residues 1 to 131 are cytoplasmic; the sequence is MNSPALQDCV…KQSKFAYKDE (131 aa). Lysine 129 contacts CoA. Residues 132–151 traverse the membrane as a helical segment; the sequence is YEKFKLYLTMILMVLSFICR. Residues 152–157 lie on the Extracellular side of the membrane; sequence FVLNSR. A helical transmembrane segment spans residues 158–176; that stretch reads VTDAVFNFLLVWYYCTLTI. The Cytoplasmic portion of the chain corresponds to 177–189; the sequence is RESILINNGSRIK. 2 residues coordinate CoA: serine 186 and arginine 187. Residues 190–208 traverse the membrane as a helical segment; sequence GWWVLNHYISTFLSGVMLT. Over 209–217 the chain is Extracellular; it reads WPDGLMYQM. A helical transmembrane segment spans residues 218–239; sequence FRNQFLSFSMYQSFVQFLQYYY. CoA is bound by residues glutamine 236, tyrosine 239, and glutamine 240. Topologically, residues 240–269 are cytoplasmic; the sequence is QSGCLYRLRALGERHNMDLTVEGFQSWMWR. Residues 270–293 traverse the membrane as a helical segment; that stretch reads GLTFLLPFLFFGQFWQLYNAITLF. Topologically, residues 294-303 are extracellular; that stretch reads KLARHPECKE. A helical transmembrane segment spans residues 304 to 329; the sequence is WQVIMCGLPFLVHFLGNFFTTLRVVH. Residues 330-336 are Cytoplasmic-facing; sequence QKFQKQN. Lysine 331 is a binding site for CoA.

It belongs to the TMEM120 family. In terms of assembly, homodimer.

It is found in the cell membrane. The protein localises to the nucleus inner membrane. It localises to the endoplasmic reticulum. Its function is as follows. Multifunctional protein involved in mechanosensation, and plays an essential role in lipid metabolism. May function as a potential ion channel involved in sensing mechanical stimuli. TMEM120A is structurally similar to a lipid-modifying enzyme, ELOVL7, and contains a bound coenzyme A molecule, which suggests it might function as an enzyme in lipid metabolism. The polypeptide is Transmembrane protein 120A (Xenopus tropicalis (Western clawed frog)).